Reading from the N-terminus, the 822-residue chain is AP-1 complex subunit gamma-1 (822 aa).

Positions 597 to 628 (EIVQTNGETEPAPLETKPPPSGPQPTSQANDL) are disordered. The GAE domain occupies 702–817 (AGIPSITAYS…QDLAEVNNFP (116 aa)).

It belongs to the adaptor complexes large subunit family. As to quaternary structure, adaptor protein complex 1 (AP-1) is a heterotetramer composed of two large adaptins (gamma-type subunit AP1G1 and beta-type subunit AP1B1), a medium adaptin (mu-type subunit AP1M1 or AP1M2) and a small adaptin (sigma-type subunit AP1S1 or AP1S2 or AP1S3). Interacts (via GAE domain) with RABEP1. Interacts with SYNRG/gamma-synergin. Interacts with EPS15. Interacts (via GAE domain) with AP1AR (via coiled-coil domain). Interacts with CLN3 (via dileucine motif); this interaction facilitates lysosomal targeting. Interacts (via GAE domain) with AFTPH/aftiphilin; the interaction is required to recruit AFTPH/aftiphilin to the perinuclear region of the cell. Widely expressed.

Its subcellular location is the golgi apparatus. It localises to the cytoplasmic vesicle. It is found in the clathrin-coated vesicle membrane. The protein resides in the cytoplasm. The protein localises to the perinuclear region. Its subcellular location is the clathrin-coated vesicle. It localises to the membrane. It is found in the clathrin-coated pit. In terms of biological role, subunit of clathrin-associated adaptor protein complex 1 that plays a role in protein sorting in the late-Golgi/trans-Golgi network (TGN) and/or endosomes. The AP complexes mediate both the recruitment of clathrin to membranes and the recognition of sorting signals within the cytosolic tails of transmembrane cargo molecules. In association with AFTPH/aftiphilin in the aftiphilin/p200/gamma-synergin complex, involved in the trafficking of transferrin from early to recycling endosomes, and the membrane trafficking of furin and the lysosomal enzyme cathepsin D between the trans-Golgi network (TGN) and endosomes. This chain is AP-1 complex subunit gamma-1 (AP1G1), found in Homo sapiens (Human).